A 307-amino-acid polypeptide reads, in one-letter code: Protoheme IX farnesyltransferase (307 aa).

The next 9 helical transmembrane spans lie at 28–48, 50–70, 99–117, 121–138, 146–166, 173–193, 219–239, 241–261, and 278–298; these read LVIFTGICGLLAAPGAINPIL, FTAILCIAMGAGGSAALNQWW, FGILISVASVGIMGIAINW, IILAAAIVYYAVIYTIWL, IVIGGGAGAFPPMIGWVAVTG, VLLFAIIFMWTPPHFWALALF, ILVYSILLIPFAVAPWAIGAT, AIYGVSALLLTGAFAALSVPV, and LFGFSILYLFALFAALVADRY.

Belongs to the UbiA prenyltransferase family. Protoheme IX farnesyltransferase subfamily.

Its subcellular location is the cell inner membrane. It catalyses the reaction heme b + (2E,6E)-farnesyl diphosphate + H2O = Fe(II)-heme o + diphosphate. The protein operates within porphyrin-containing compound metabolism; heme O biosynthesis; heme O from protoheme: step 1/1. Its function is as follows. Converts heme B (protoheme IX) to heme O by substitution of the vinyl group on carbon 2 of heme B porphyrin ring with a hydroxyethyl farnesyl side group. The protein is Protoheme IX farnesyltransferase of Erythrobacter litoralis (strain HTCC2594).